The following is a 250-amino-acid chain: LOB domain-containing protein 37 (250 aa).

The LOB domain maps to methionine 1–leucine 107. The segment at aspartate 145 to alanine 227 is disordered. Over residues phenylalanine 157–serine 170 the composition is skewed to low complexity.

The protein belongs to the LOB domain-containing protein family. In terms of tissue distribution, expressed in young shoots, roots, stems, leaves and flowers.

The chain is LOB domain-containing protein 37 (LBD37) from Arabidopsis thaliana (Mouse-ear cress).